Here is a 1825-residue protein sequence, read N- to C-terminus: Serine protease/ABC transporter B family protein tagD (1825 aa).

The signal sequence occupies residues 1 to 26 (MKSNTNIRVLLVSGLILIFIFLGIKF). Residues 307–727 (PKAIFGTKDT…NAVFDTFAGA (421 aa)) enclose the Peptidase S8 domain. Catalysis depends on charge relay system residues aspartate 338 and histidine 384. N-linked (GlcNAc...) asparagine glycosylation is present at asparagine 629. The active-site Charge relay system is the serine 652. N-linked (GlcNAc...) asparagine glycans are attached at residues asparagine 704, asparagine 781, asparagine 849, and asparagine 896. Residues 971 to 991 (YIVIIVAGGTMSLIITVLILI) traverse the membrane as a helical segment. N-linked (GlcNAc...) asparagine glycosylation is present at asparagine 1018. The next 4 helical transmembrane spans lie at 1071–1091 (FIIEITISTACSLVATAASIL), 1116–1136 (FIIIFLLALLEFVFSTISSWI), 1189–1209 (GILLSVSVGICKFVGSLVFIF), and 1210–1230 (TISWKLSLAFFATVPVLAIVT). Positions 1075–1358 (ITISTACSLV…LFGVYSSYVQ (284 aa)) constitute an ABC transmembrane type-1 domain. Asparagine 1295 carries N-linked (GlcNAc...) asparagine glycosylation. A run of 2 helical transmembrane segments spans residues 1304–1324 (WLMVESLAFIILYFGAYLAIQ) and 1327–1347 (FTVGLLVSFSLYIGYVIDSST). A disordered region spans residues 1386–1529 (DNIIDTNQDN…NDDPNDNNGI (144 aa)). Over residues 1388–1402 (IIDTNQDNNNNNNND) the composition is skewed to low complexity. Acidic residues predominate over residues 1403–1415 (DISDSSSDDDDDN). Asparagine 1424 carries an N-linked (GlcNAc...) asparagine glycan. Residues 1465–1494 (GEGIDNNNNNNNDNNINDDNNQQDPNNNNN) are compositionally biased toward low complexity. The segment covering 1495-1514 (EIDDDGDDDGDDDDEGEDEN) has biased composition (acidic residues). The span at 1515–1529 (NNNNNNDDPNDNNGI) shows a compositional bias: low complexity. Positions 1576–1813 (IEFKNVSFCY…KGKYYRMFAF (238 aa)) constitute an ABC transporter domain. Asparagine 1580 is a glycosylation site (N-linked (GlcNAc...) asparagine). 1611–1618 (GPSGSGKS) provides a ligand contact to ATP. N-linked (GlcNAc...) asparagine glycans are attached at residues asparagine 1715 and asparagine 1755.

In the C-terminal section; belongs to the ABC transporter superfamily. ABCB family. Multidrug resistance exporter (TC 3.A.1.201) subfamily. The protein in the N-terminal section; belongs to the peptidase S8 family.

The protein localises to the membrane. The sequence is that of Serine protease/ABC transporter B family protein tagD (tagD) from Dictyostelium discoideum (Social amoeba).